The sequence spans 244 residues: rRNA adenine N-6-methyltransferase (244 aa).

S-adenosyl-L-methionine contacts are provided by N11, I13, G38, E59, D84, and N101.

It belongs to the class I-like SAM-binding methyltransferase superfamily. rRNA adenine N(6)-methyltransferase family.

The catalysed reaction is adenosine(2085) in 23S rRNA + 2 S-adenosyl-L-methionine = N(6)-dimethyladenosine(2085) in 23S rRNA + 2 S-adenosyl-L-homocysteine + 2 H(+). Functionally, this protein produces a dimethylation of the adenine residue at position 2085 in 23S rRNA, resulting in reduced affinity between ribosomes and macrolide-lincosamide-streptogramin B antibiotics. The polypeptide is rRNA adenine N-6-methyltransferase (ermM) (Staphylococcus epidermidis).